The chain runs to 442 residues: 3-phosphoshikimate 1-carboxyvinyltransferase (442 aa).

3 residues coordinate 3-phosphoshikimate: lysine 25, serine 26, and arginine 30. Lysine 25 is a phosphoenolpyruvate binding site. Residues glycine 97 and arginine 125 each coordinate phosphoenolpyruvate. 3-phosphoshikimate is bound by residues serine 170, glutamine 172, aspartate 323, and lysine 350. Glutamine 172 is a binding site for phosphoenolpyruvate. Aspartate 323 functions as the Proton acceptor in the catalytic mechanism. Residues arginine 354 and arginine 399 each contribute to the phosphoenolpyruvate site.

The protein belongs to the EPSP synthase family. In terms of assembly, monomer.

It localises to the cytoplasm. It catalyses the reaction 3-phosphoshikimate + phosphoenolpyruvate = 5-O-(1-carboxyvinyl)-3-phosphoshikimate + phosphate. It functions in the pathway metabolic intermediate biosynthesis; chorismate biosynthesis; chorismate from D-erythrose 4-phosphate and phosphoenolpyruvate: step 6/7. Its function is as follows. Catalyzes the transfer of the enolpyruvyl moiety of phosphoenolpyruvate (PEP) to the 5-hydroxyl of shikimate-3-phosphate (S3P) to produce enolpyruvyl shikimate-3-phosphate and inorganic phosphate. This is 3-phosphoshikimate 1-carboxyvinyltransferase from Bartonella henselae (strain ATCC 49882 / DSM 28221 / CCUG 30454 / Houston 1) (Rochalimaea henselae).